The following is a 933-amino-acid chain: Serine/threonine-protein kinase EDR1 (933 aa).

The segment covering Met-1–Arg-10 has biased composition (basic residues). 4 disordered regions span residues Met-1–Met-74, Cys-342–Gly-424, His-527–Ser-550, and His-604–Asp-650. The span at Asn-37–Glu-48 shows a compositional bias: polar residues. Over residues Ala-53–Ser-68 the composition is skewed to low complexity. Residues Cys-342–Asn-356 are compositionally biased toward polar residues. Residues Ser-367–Ser-378 show a composition bias toward low complexity. Over residues Leu-379–Asp-389 the composition is skewed to basic and acidic residues. The segment covering Ser-404–Thr-413 has biased composition (low complexity). The segment covering Gly-533 to Ser-550 has biased composition (polar residues). Residues Gln-607–Ser-621 show a composition bias toward basic and acidic residues. The Protein kinase domain maps to Leu-669–Asn-925. Residues Ile-675 to Val-683 and Lys-696 each bind ATP. The Proton acceptor role is filled by Asp-792.

It belongs to the protein kinase superfamily. TKL Ser/Thr protein kinase family. RAF subfamily. Interacts with KEG. Binds and recruited by EDR4 at the powdery mildew (e.g. G.cichoracearum) penetration site on the plasma membrane. Autophosphorylated.

The protein localises to the cell membrane. Its subcellular location is the endosome. The protein resides in the nucleus. It localises to the endoplasmic reticulum. It is found in the golgi apparatus. The protein localises to the trans-Golgi network. Its subcellular location is the early endosome. The enzyme catalyses L-seryl-[protein] + ATP = O-phospho-L-seryl-[protein] + ADP + H(+). It carries out the reaction L-threonyl-[protein] + ATP = O-phospho-L-threonyl-[protein] + ADP + H(+). In terms of biological role, MAPKKK serine/threonine-protein kinase involved in the regulation of a MAP kinase cascade (probably including MPK3 and MPK6) that negatively regulates salicylic acid- (SA-) dependent defense responses, abscisic acid (ABA) signaling, and ethylene-induced senescence. Also modulates stress response (e.g. drought) signaling and cell death, in an ORE9-dependent manner. Functions at a point of cross talk between ethylene, ABA and SA signaling that impinges on senescence and cell death. On the other hand, it confers sensitivity to various pathogens such as the fungus E.cichoracearum, the oomycete H.parasitica and the bacteria P.syringae pv. tomato DC3000. Required for resistance to some hemibiotrophic/necrotrophic fungal pathogens (e.g. C.gloeosporioides, C.higginsianum and A.brassicicola) through the induction of defensin expression, probably by repressing MYC2, an inhibitor of defensin genes (PDFs). Together with KEG, may regulate endocytic trafficking and/or the formation of signaling complexes on trans-Golgi network (TGN)/ early endosome (EE) vesicles during stress responses. The protein is Serine/threonine-protein kinase EDR1 (EDR1) of Arabidopsis thaliana (Mouse-ear cress).